Consider the following 2292-residue polypeptide: Protein Ycf2 (2292 aa).

1640–1647 (GSIGIGRS) provides a ligand contact to ATP.

Belongs to the Ycf2 family.

The protein resides in the plastid. The protein localises to the chloroplast stroma. Its function is as follows. Probable ATPase of unknown function. Its presence in a non-photosynthetic plant (Epifagus virginiana) and experiments in tobacco indicate that it has an essential function which is probably not related to photosynthesis. The protein is Protein Ycf2 of Liriodendron tulipifera (Tuliptree).